Consider the following 446-residue polypeptide: Probable D-serine dehydratase (446 aa).

Lys118 bears the N6-(pyridoxal phosphate)lysine mark.

The protein belongs to the serine/threonine dehydratase family. DsdA subfamily. Pyridoxal 5'-phosphate is required as a cofactor.

It catalyses the reaction D-serine = pyruvate + NH4(+). The polypeptide is Probable D-serine dehydratase (Ectopseudomonas mendocina (strain ymp) (Pseudomonas mendocina)).